The primary structure comprises 242 residues: Small ribosomal subunit protein uS2 (242 aa).

This sequence belongs to the universal ribosomal protein uS2 family.

The sequence is that of Small ribosomal subunit protein uS2 from Shewanella denitrificans (strain OS217 / ATCC BAA-1090 / DSM 15013).